The chain runs to 559 residues: Asparagine--tRNA ligase, cytoplasmic (559 aa).

Position 72 is a phosphoserine (S72). A disordered region spans residues 82 to 102; that stretch reads HREQMKNDSREKKEAEDNLRR. Position 255 is an N6-acetyllysine (K255). Residue S493 is modified to Phosphoserine. N6-acetyllysine is present on K501.

It belongs to the class-II aminoacyl-tRNA synthetase family. As to quaternary structure, homodimer.

The protein resides in the cytoplasm. The catalysed reaction is tRNA(Asn) + L-asparagine + ATP = L-asparaginyl-tRNA(Asn) + AMP + diphosphate + H(+). Catalyzes the attachment of asparagine to tRNA(Asn) in a two-step reaction: asparagine is first activated by ATP to form Asn-AMP and then transferred to the acceptor end of tRNA(Asn). In addition to its essential role in protein synthesis, acts as a signaling molecule that induced migration of CCR3-expressing cells. Has an essential role in the development of the cerebral cortex, being required for proper proliferation of radial glial cells. This chain is Asparagine--tRNA ligase, cytoplasmic, found in Mus musculus (Mouse).